Reading from the N-terminus, the 290-residue chain is Light-independent protochlorophyllide reductase iron-sulfur ATP-binding protein (290 aa).

ATP is bound by residues 10–15 (GIGKST) and Lys39. Ser14 lines the Mg(2+) pocket. Residues Cys95 and Cys129 each coordinate [4Fe-4S] cluster. 180–181 (NR) is a binding site for ATP.

The protein belongs to the NifH/BchL/ChlL family. In terms of assembly, homodimer. Protochlorophyllide reductase is composed of three subunits; ChlL, ChlN and ChlB. It depends on [4Fe-4S] cluster as a cofactor.

The protein localises to the plastid. Its subcellular location is the chloroplast. The enzyme catalyses chlorophyllide a + oxidized 2[4Fe-4S]-[ferredoxin] + 2 ADP + 2 phosphate = protochlorophyllide a + reduced 2[4Fe-4S]-[ferredoxin] + 2 ATP + 2 H2O. The protein operates within porphyrin-containing compound metabolism; chlorophyll biosynthesis (light-independent). Functionally, component of the dark-operative protochlorophyllide reductase (DPOR) that uses Mg-ATP and reduced ferredoxin to reduce ring D of protochlorophyllide (Pchlide) to form chlorophyllide a (Chlide). This reaction is light-independent. The L component serves as a unique electron donor to the NB-component of the complex, and binds Mg-ATP. In Angiopteris evecta (Mule's foot fern), this protein is Light-independent protochlorophyllide reductase iron-sulfur ATP-binding protein.